Consider the following 64-residue polypeptide: Conotoxin Pn-B01121 (64 aa).

Residues 1-22 (MCCLPVFVILLLLIASAPSVDA) form the signal peptide. Residues 23–48 (LPKTKDDMSLASFHDNAKRTLQILSN) constitute a propeptide that is removed on maturation. W63 is subject to Tryptophan amide.

This sequence belongs to the conotoxin T superfamily. Contains 2 disulfide bonds that can be either 'C1-C3, C2-C4' or 'C1-C4, C2-C3', since these disulfide connectivities have been observed for conotoxins with cysteine framework V (for examples, see AC P0DQQ7 and AC P81755). In terms of tissue distribution, expressed by the venom duct.

Its subcellular location is the secreted. This chain is Conotoxin Pn-B01121, found in Conus pennaceus (Feathered cone).